Consider the following 344-residue polypeptide: MTTIAVVGATGQVGQVMRTLLEERNFPADTVRFFASPRSAGRKIEFRGTEIEVEDITQATEESLKDIDVALFSAGGTASKQYAPLFAAAGATVVDNSSAWRKDDEVPLIVSEVNPSDKDSLVKGIIANPNCTTMAAMPVLKPLHDAAGLVKLHVSSYQAVSGSGLAGVETLAKQVAAVGDHNVEFVHDGQAADAGDVGPYVSPIAYNVLPFAGNLVDDGTFETDEEQKLRNESRKILGLPDLKVSGTCVRVPVFTGHTLTIHAEFDKAITVEQAQEILGAASGVKLVDVPTPLAAAGIDESLVGRIRQDSTVDDNRGLVLVVSGDNLRKGAALNTIQIAELLVK.

NADP(+) contacts are provided by residues 10 to 13 (TGQV) and 38 to 39 (RS). Residue arginine 101 participates in phosphate binding. The active-site Acyl-thioester intermediate is cysteine 131. Glutamine 158 provides a ligand contact to substrate. NADP(+) is bound at residue 161-162 (SG). Lysine 228 is a binding site for phosphate. Arginine 250 is a binding site for substrate. The Proton acceptor role is filled by histidine 257. Asparagine 326 is an NADP(+) binding site.

The protein belongs to the aspartate-semialdehyde dehydrogenase family. Homodimer.

The catalysed reaction is L-aspartate 4-semialdehyde + phosphate + NADP(+) = 4-phospho-L-aspartate + NADPH + H(+). It functions in the pathway amino-acid biosynthesis; L-lysine biosynthesis via DAP pathway; (S)-tetrahydrodipicolinate from L-aspartate: step 2/4. It participates in amino-acid biosynthesis; L-methionine biosynthesis via de novo pathway; L-homoserine from L-aspartate: step 2/3. Its pathway is amino-acid biosynthesis; L-threonine biosynthesis; L-threonine from L-aspartate: step 2/5. Its function is as follows. Catalyzes the NADPH-dependent formation of L-aspartate-semialdehyde (L-ASA) by the reductive dephosphorylation of L-aspartyl-4-phosphate. The sequence is that of Aspartate-semialdehyde dehydrogenase from Corynebacterium melassecola.